A 361-amino-acid chain; its full sequence is Serine/threonine-protein kinase SRK2B (361 aa).

The Protein kinase domain maps to Tyr-4–Phe-260. ATP-binding positions include Ile-10–Ala-18 and Lys-33. Asp-123 serves as the catalytic Proton acceptor. At Ser-154 the chain carries Phosphoserine. The tract at residues Ala-311–Ser-361 is disordered. Over residues Glu-318–Tyr-344 the composition is skewed to acidic residues.

The protein belongs to the protein kinase superfamily. Ser/Thr protein kinase family. As to expression, expressed in seedlings.

The enzyme catalyses L-seryl-[protein] + ATP = O-phospho-L-seryl-[protein] + ADP + H(+). The catalysed reaction is L-threonyl-[protein] + ATP = O-phospho-L-threonyl-[protein] + ADP + H(+). The sequence is that of Serine/threonine-protein kinase SRK2B (SRK2B) from Arabidopsis thaliana (Mouse-ear cress).